The chain runs to 243 residues: MNETDIEGARVVVAEACRVAAARGLMEGILGHISFRVSPDLLLIRCRSADDTGVAYTRPSDIRLVRFDGTAGAPGELDNGYQVPKELPVHVESMRASPDIRAVAHLHPPSIVAADLAGISLRPIYGAYDIPGAVLARGGVPVYRRAVLIHSTQLGKEMVTAMGDRPVVICRGHGITSVASSVQQSVLQAASLEELARMSLAVVSAGGTLVDIDDADWEDLPDLGANFNTGAVWRHEVARAATV.

The Proton donor/acceptor role is filled by Glu-86. Glu-86, His-105, His-107, and His-173 together coordinate a divalent metal cation.

This sequence belongs to the aldolase class II family. A divalent metal cation serves as cofactor.

It catalyses the reaction 3,4-dihydroxyphthalate + H(+) = 3,4-dihydroxybenzoate + CO2. It functions in the pathway xenobiotic degradation; phthalate degradation. Catalyzes the decarboxylation of 3,4-dihydroxyphthalate to protocatechuate (3,4-dihydroxybenzoate) during phthalate metabolism. This Rhodococcus jostii (strain RHA1) protein is 3,4-dihydroxyphthalate decarboxylase.